The chain runs to 88 residues: Three-finger toxin 3FTx-2 (88 aa).

Positions methionine 1–threonine 21 are cleaved as a signal peptide. 4 disulfides stabilise this stretch: cysteine 27/cysteine 48, cysteine 41/cysteine 66, cysteine 70/cysteine 81, and cysteine 82/cysteine 87.

Belongs to the three-finger toxin family. Ancestral subfamily. Orphan group II sub-subfamily. As to expression, expressed by the venom gland.

Its subcellular location is the secreted. Its function is as follows. Binds with low affinity to muscular (alpha-1-beta-1-delta-epsilon/CHRNA1-CHRNB1-CHRND-CHRNE) and very low affinity to neuronal (alpha-7/CHRNA7) nicotinic acetylcholine receptor (nAChR). The sequence is that of Three-finger toxin 3FTx-2 from Micrurus corallinus (Brazilian coral snake).